The sequence spans 217 residues: Guanylate kinase (217 aa).

Low complexity predominate over residues 1 to 10 (MAVSSTTLSS). Residues 1–30 (MAVSSTTLSSPTPPECLQQQEAPRPPATRG) are disordered. Residues 30–208 (GRLVVLTGPS…ALQELEALLY (179 aa)) form the Guanylate kinase-like domain. 37-44 (GPSGVGKG) contacts ATP.

Belongs to the guanylate kinase family.

The protein resides in the cytoplasm. It catalyses the reaction GMP + ATP = GDP + ADP. It carries out the reaction dZMP + ATP = dZDP + ADP. It participates in purine metabolism. In terms of biological role, essential for recycling GMP and indirectly, cGMP. Functionally, (Microbial infection) Catalyzes the phosphorylation of dZMP to dZDP, when the bacterium is infected by a phage that produces the substrate for the synthesis of dZTP (2- amino-2'-deoxyadenosine 5'-triphosphate), which is then used by the phage as a DNA polymerase substrate. The polypeptide is Guanylate kinase (Synechococcus sp. (strain JA-3-3Ab) (Cyanobacteria bacterium Yellowstone A-Prime)).